A 108-amino-acid polypeptide reads, in one-letter code: Thiosulfate sulfurtransferase GlpE (108 aa).

The Rhodanese domain maps to 17 to 105; the sequence is KDGSAALVDI…WARQYPQDVE (89 aa). C65 acts as the Cysteine persulfide intermediate in catalysis.

This sequence belongs to the GlpE family.

It is found in the cytoplasm. It carries out the reaction thiosulfate + hydrogen cyanide = thiocyanate + sulfite + 2 H(+). The catalysed reaction is thiosulfate + [thioredoxin]-dithiol = [thioredoxin]-disulfide + hydrogen sulfide + sulfite + 2 H(+). Its function is as follows. Transferase that catalyzes the transfer of sulfur from thiosulfate to thiophilic acceptors such as cyanide or dithiols. May function in a CysM-independent thiosulfate assimilation pathway by catalyzing the conversion of thiosulfate to sulfite, which can then be used for L-cysteine biosynthesis. In Serratia proteamaculans (strain 568), this protein is Thiosulfate sulfurtransferase GlpE.